A 347-amino-acid polypeptide reads, in one-letter code: N-acetyl-gamma-glutamyl-phosphate reductase (347 aa).

C152 is a catalytic residue.

This sequence belongs to the NAGSA dehydrogenase family. Type 1 subfamily.

The protein resides in the cytoplasm. The catalysed reaction is N-acetyl-L-glutamate 5-semialdehyde + phosphate + NADP(+) = N-acetyl-L-glutamyl 5-phosphate + NADPH + H(+). It functions in the pathway amino-acid biosynthesis; L-arginine biosynthesis; N(2)-acetyl-L-ornithine from L-glutamate: step 3/4. Functionally, catalyzes the NADPH-dependent reduction of N-acetyl-5-glutamyl phosphate to yield N-acetyl-L-glutamate 5-semialdehyde. This chain is N-acetyl-gamma-glutamyl-phosphate reductase, found in Ehrlichia ruminantium (strain Gardel).